The primary structure comprises 396 residues: Elongation factor Tu (396 aa).

Residues 10–206 (KPHVNVGTIG…ALDSFIPEPT (197 aa)) form the tr-type G domain. Residues 19–26 (GHVDHGKT) form a G1 region. 19–26 (GHVDHGKT) is a binding site for GTP. T26 contributes to the Mg(2+) binding site. The G2 stretch occupies residues 60–64 (GITIS). Residues 81 to 84 (DCPG) are G3. Residues 81-85 (DCPGH) and 136-139 (NKAD) each bind GTP. A G4 region spans residues 136–139 (NKAD). The interval 174–176 (SAR) is G5.

The protein belongs to the TRAFAC class translation factor GTPase superfamily. Classic translation factor GTPase family. EF-Tu/EF-1A subfamily. In terms of assembly, monomer.

The protein resides in the cytoplasm. It catalyses the reaction GTP + H2O = GDP + phosphate + H(+). Functionally, GTP hydrolase that promotes the GTP-dependent binding of aminoacyl-tRNA to the A-site of ribosomes during protein biosynthesis. The sequence is that of Elongation factor Tu from Xanthomonas euvesicatoria pv. vesicatoria (strain 85-10) (Xanthomonas campestris pv. vesicatoria).